Consider the following 260-residue polypeptide: Proteasome subunit alpha (260 aa).

The protein belongs to the peptidase T1A family. The 20S proteasome core is composed of 14 alpha and 14 beta subunits that assemble into four stacked heptameric rings, resulting in a barrel-shaped structure. The two inner rings, each composed of seven catalytic beta subunits, are sandwiched by two outer rings, each composed of seven alpha subunits. The catalytic chamber with the active sites is on the inside of the barrel. Has a gated structure, the ends of the cylinder being occluded by the N-termini of the alpha-subunits. Is capped at one or both ends by the proteasome regulatory ATPase, PAN.

The protein localises to the cytoplasm. Its activity is regulated as follows. The formation of the proteasomal ATPase PAN-20S proteasome complex, via the docking of the C-termini of PAN into the intersubunit pockets in the alpha-rings, triggers opening of the gate for substrate entry. Interconversion between the open-gate and close-gate conformations leads to a dynamic regulation of the 20S proteasome proteolysis activity. Its function is as follows. Component of the proteasome core, a large protease complex with broad specificity involved in protein degradation. This is Proteasome subunit alpha from Thermococcus sp. (strain JCM 11816 / KS-1).